Consider the following 100-residue polypeptide: Urease subunit gamma (100 aa).

It belongs to the urease gamma subunit family. As to quaternary structure, heterotrimer of UreA (gamma), UreB (beta) and UreC (alpha) subunits. Three heterotrimers associate to form the active enzyme.

It is found in the cytoplasm. It carries out the reaction urea + 2 H2O + H(+) = hydrogencarbonate + 2 NH4(+). It participates in nitrogen metabolism; urea degradation; CO(2) and NH(3) from urea (urease route): step 1/1. The chain is Urease subunit gamma from Shewanella halifaxensis (strain HAW-EB4).